The following is a 756-amino-acid chain: 1-phosphatidylinositol 4,5-bisphosphate phosphodiesterase delta-1 (756 aa).

The PH domain occupies 21–130 (ALLKGSQLLK…WVQGLRKIIH (110 aa)). The tract at residues 30–57 (KVKSSSWRRERFYKLQEDCKTIWQESRK) is substrate binding. EF-hand domains lie at 140 to 175 (KLQH…LNIQ) and 176 to 211 (VDDG…LTQR). Ca(2+) is bound by residues D153, N155, D157, K159, E164, D189, S191, T193, S195, and E200. A glycan (O-linked (GlcNAc) serine) is linked at S191. T193 carries O-linked (GlcNAc) threonine glycosylation. One can recognise a PI-PLC X-box domain in the interval 296 to 440 (QDMDQPLSHY…LKGKILLKGK (145 aa)). Residue H311 is part of the active site. Residues N312, E341, and D343 each contribute to the Ca(2+) site. The active site involves H356. Residue E390 participates in Ca(2+) binding. Positions 438 and 440 each coordinate substrate. T457 bears the Phosphothreonine mark. S460 carries the post-translational modification Phosphoserine. Residues 492–609 (LSDMIIYCKS…GYVLKPAFLR (118 aa)) form the PI-PLC Y-box domain. 2 residues coordinate substrate: S522 and R549. The C2 domain occupies 609–737 (RDPNTTFNSR…QGYRHVHLLS (129 aa)). The Ca(2+) site is built by I651, D653, N677, D706, Y707, and D708.

Interacts with TGM2. Requires Ca(2+) as cofactor.

The catalysed reaction is a 1,2-diacyl-sn-glycero-3-phospho-(1D-myo-inositol-4,5-bisphosphate) + H2O = 1D-myo-inositol 1,4,5-trisphosphate + a 1,2-diacyl-sn-glycerol + H(+). It catalyses the reaction a 1,2-diacyl-sn-glycero-3-phospho-(1D-myo-inositol) + H2O = 1D-myo-inositol 1-phosphate + a 1,2-diacyl-sn-glycerol + H(+). Functionally, the production of the second messenger molecules diacylglycerol (DAG) and inositol 1,4,5-trisphosphate (IP3) is mediated by activated phosphatidylinositol-specific phospholipase C enzymes. Essential for trophoblast and placental development. Binds phosphatidylinositol 4,5-bisphosphate. This Rattus norvegicus (Rat) protein is 1-phosphatidylinositol 4,5-bisphosphate phosphodiesterase delta-1.